The following is a 477-amino-acid chain: Ribulose bisphosphate carboxylase large chain (477 aa).

A propeptide spanning residues 1-2 (MS) is cleaved from the precursor. An N-acetylproline modification is found at proline 3. Lysine 14 carries the N6,N6,N6-trimethyllysine modification. Substrate contacts are provided by asparagine 123 and threonine 173. Residue lysine 175 is the Proton acceptor of the active site. Residue lysine 177 participates in substrate binding. Residues lysine 201, aspartate 203, and glutamate 204 each contribute to the Mg(2+) site. Lysine 201 carries the post-translational modification N6-carboxylysine. Histidine 294 (proton acceptor) is an active-site residue. Positions 295, 327, and 379 each coordinate substrate.

This sequence belongs to the RuBisCO large chain family. Type I subfamily. In terms of assembly, heterohexadecamer of 8 large chains and 8 small chains; disulfide-linked. The disulfide link is formed within the large subunit homodimers. The cofactor is Mg(2+). Post-translationally, the disulfide bond which can form in the large chain dimeric partners within the hexadecamer appears to be associated with oxidative stress and protein turnover.

Its subcellular location is the plastid. It is found in the chloroplast. It carries out the reaction 2 (2R)-3-phosphoglycerate + 2 H(+) = D-ribulose 1,5-bisphosphate + CO2 + H2O. The catalysed reaction is D-ribulose 1,5-bisphosphate + O2 = 2-phosphoglycolate + (2R)-3-phosphoglycerate + 2 H(+). Functionally, ruBisCO catalyzes two reactions: the carboxylation of D-ribulose 1,5-bisphosphate, the primary event in carbon dioxide fixation, as well as the oxidative fragmentation of the pentose substrate in the photorespiration process. Both reactions occur simultaneously and in competition at the same active site. This Solanum bulbocastanum (Wild potato) protein is Ribulose bisphosphate carboxylase large chain.